A 412-amino-acid chain; its full sequence is 1-deoxy-D-xylulose 5-phosphate reductoisomerase (412 aa).

Thr10, Gly11, Ser12, Ile13, Gly36, Lys37, Asn38, and Asn130 together coordinate NADPH. Lys131 is a 1-deoxy-D-xylulose 5-phosphate binding site. Glu132 provides a ligand contact to NADPH. Asp156 is a binding site for Mn(2+). Ser157, Glu158, Ser194, and His217 together coordinate 1-deoxy-D-xylulose 5-phosphate. Position 158 (Glu158) interacts with Mn(2+). Residue Gly223 coordinates NADPH. 1-deoxy-D-xylulose 5-phosphate is bound by residues Ser230, Asn235, Lys236, and Glu239. Residue Glu239 participates in Mn(2+) binding.

The protein belongs to the DXR family. The cofactor is Mg(2+). Requires Mn(2+) as cofactor.

It carries out the reaction 2-C-methyl-D-erythritol 4-phosphate + NADP(+) = 1-deoxy-D-xylulose 5-phosphate + NADPH + H(+). It functions in the pathway isoprenoid biosynthesis; isopentenyl diphosphate biosynthesis via DXP pathway; isopentenyl diphosphate from 1-deoxy-D-xylulose 5-phosphate: step 1/6. Functionally, catalyzes the NADPH-dependent rearrangement and reduction of 1-deoxy-D-xylulose-5-phosphate (DXP) to 2-C-methyl-D-erythritol 4-phosphate (MEP). This Prochlorococcus marinus (strain NATL2A) protein is 1-deoxy-D-xylulose 5-phosphate reductoisomerase.